Reading from the N-terminus, the 313-residue chain is Aspartoacylase (313 aa).

Residues histidine 21 and glutamate 24 each contribute to the Zn(2+) site. Residues arginine 63, asparagine 70, and arginine 71 each contribute to the N-acetyl-L-aspartate site. Zn(2+) is bound at residue histidine 116. The N-acetyl-L-aspartate site is built by tyrosine 164 and arginine 168. Catalysis depends on glutamate 178, which acts as the Proton donor/acceptor. Tyrosine 288 is an N-acetyl-L-aspartate binding site.

This sequence belongs to the AspA/AstE family. Aspartoacylase subfamily. In terms of assembly, homodimer. Zn(2+) serves as cofactor.

It localises to the cytoplasm. It is found in the nucleus. It catalyses the reaction an N-acyl-L-aspartate + H2O = a carboxylate + L-aspartate. The enzyme catalyses N-acetyl-L-aspartate + H2O = L-aspartate + acetate. Its function is as follows. Catalyzes the deacetylation of N-acetylaspartic acid (NAA) to produce acetate and L-aspartate. NAA occurs in high concentration in brain and its hydrolysis NAA plays a significant part in the maintenance of intact white matter. In other tissues it acts as a scavenger of NAA from body fluids. The protein is Aspartoacylase of Pongo abelii (Sumatran orangutan).